The following is a 309-amino-acid chain: tRNA pseudouridine synthase B (309 aa).

Asp39 serves as the catalytic Nucleophile.

The protein belongs to the pseudouridine synthase TruB family. Type 1 subfamily.

It carries out the reaction uridine(55) in tRNA = pseudouridine(55) in tRNA. Functionally, responsible for synthesis of pseudouridine from uracil-55 in the psi GC loop of transfer RNAs. In Bacillus licheniformis (strain ATCC 14580 / DSM 13 / JCM 2505 / CCUG 7422 / NBRC 12200 / NCIMB 9375 / NCTC 10341 / NRRL NRS-1264 / Gibson 46), this protein is tRNA pseudouridine synthase B.